The primary structure comprises 82 residues: Photosystem I iron-sulfur center (82 aa).

4Fe-4S ferredoxin-type domains lie at 2 to 31 (AHSV…MVPW) and 40 to 69 (IAAA…IRVY). Cys-11, Cys-14, Cys-17, Cys-21, Cys-49, Cys-52, Cys-55, and Cys-59 together coordinate [4Fe-4S] cluster.

In terms of assembly, the cyanobacterial PSI reaction center is composed of one copy each of PsaA,B,C,D,E,F,I,J,K,L,M and X, and forms trimeric complexes. Requires [4Fe-4S] cluster as cofactor.

It localises to the cellular thylakoid membrane. It carries out the reaction reduced [plastocyanin] + hnu + oxidized [2Fe-2S]-[ferredoxin] = oxidized [plastocyanin] + reduced [2Fe-2S]-[ferredoxin]. In terms of biological role, apoprotein for the two 4Fe-4S centers FA and FB of photosystem I (PSI); essential for photochemical activity. FB is the terminal electron acceptor of PSI, donating electrons to ferredoxin. The C-terminus interacts with PsaA/B/D and helps assemble the protein into the PSI complex. Required for binding of PsaD and PsaE to PSI. PSI is a plastocyanin/cytochrome c6-ferredoxin oxidoreductase, converting photonic excitation into a charge separation, which transfers an electron from the donor P700 chlorophyll pair to the spectroscopically characterized acceptors A0, A1, FX, FA and FB in turn. This Synechococcus sp. (strain JA-2-3B'a(2-13)) (Cyanobacteria bacterium Yellowstone B-Prime) protein is Photosystem I iron-sulfur center.